A 1776-amino-acid polypeptide reads, in one-letter code: MTTYRPLPNDGVDLAASCGARSTDILPGPHPGDYTPMGFWAQNGSMPQPLGESPAATTTRPSPTTPAMPKMGVRARVADWPPKRDALREQSNPSPSQDTDGVKTTKVAHSMRNLQNGQLPSSTPASSGSRAFHRLSRRRSKDVEFQDGWPRSPGRAFLPLRHRSSSEITLSECDVEEPGDPRGTRHPGVLPLFREYGSTSSIDVQGVPEQSFFDILNEFRSEQPEARGSQNLRELLQVDPGALSGGSCGTKGDPRNGQPTKDSLQSLQPLKEKEKSRKKPVRGLGSGDTVDSSIFRKLRSSKPEGEVGRPLGETEESRSPPEASRPWVCQKSFAHFDVQSMLFDLNEAAANRVSVAQRRNTTTGASAASAASAMVTLTASRAHSLGTLDPAFTSTEDLNCKENLEQDLGDDNSNDLLLSCPHFRNEIGGERERNVSFSRASVGSPGGSSEAHMAEPTLSTHRTNASISVLEVPKEQQRTQSRPRQYSIEHVDLGARYYQDYFVGKEHANYFGVDEKLGPVAVSIKREKLEDHKDHGPQYQYRIIFRTRELITLRGSILEDATPTATKHGTGRGLPLKDALEYVIPELNIHCLRLALNTPKVTEQLLKLDEQGLCRKHKVGILYCKAGQSSEEEMYNNEEAGPAFEEFLDLLGDKVCLKGFTKYAAQLDVKTDSTGTHSLYTTYQDYEIMFHVSTLLPYTPNNRQQLLRKRHIGNDIVTIIFQEPGALPFTPKNIRSHFQHVFIIVRVHNPCTENVCYSMAVTRSKDAPPFGPPIPNGTTFRKSDVFRDFLLAKVINAENAAHKSDKFHTMATRTRQEYLKDLAENCVSNTPIDSSGKFNLISLTSKKKEKTKARAGAEQHSAGAIAWRVAAQDYAQGSEIDCILGISNEFVVLLDLRTKEVVFNCYCGDVIGWTPDSSTIKIFYGRGDHIFLQAAEGSVEDIRDIVQRLKVMTNGWETVDMTLRRNGLGQLGFHVKYDGTVAEVEDYGFAWQAGLRQGSRLVEICKVAVVTLSHDQMIDLLRTSVTVKVVIIPPFEDGTPRRGWPETYDMNASEPKTESETTTPGGRPPYRSNAPWQWSGPASHNSLPATKWTTPATPGHAQSLSRLPKQTPVVPFRESQPLHSKRPVSFPETPFAASPAGADRVPPYRQPSGSFSTPGSATYARYKPSPERYAAAPHPLLSFDPHFMHDGMSSGDSSSGGLTSQESTMERPKPEPLWHVPAQARLSAMTGSIGSKHPSRQDAAGKDSPNRHSKGEPQYSSHSSSNTLSSNASSSHSDDRWFDPLDPLEPEQDPFSKGGSSDSGIDTTLYTSSPSCMSLAKAPRPTKPHKPPGNIGLCGGGRESAGRPHPVDRRREVSPAPVVAGQNKGYRPKLYSSGSCTPPGLVGGSRDPPRQPSDMGSRAGYPTQVYKTASAETPRPSQLSQCSPFQLSTSVPKSFFSKQPAHNKHSTGWKRTDEPPPRPLPFTDSKKQVDTNAKNVFGQPRLRASLRDLRSPRKNYKSTIEDDLKKLIVMDNLGPEQERDTGQSPQKSLQRTLSDESLCSGRREPSFASPASLEPGLPSDVLFTSTCTFPSSTLPARRQHQHAHPPSGAPSTTPATGNGFPEKKSAISASELSLADGRDRPLRRLDPGMMPLPDTAAGLEWSSLVNAAKAYEVQRAVSLFSLNDPALSPEIPPAHSPVHSHLSLERGPQTPRATPTMSEESPLDLTGKVYQLEVMLKQLHTDLQKEKQDKVVLQSEVASLRQNNQRLQEESQAASEQLRKFAELFSREKKEL.

Disordered regions lie at residues 41-157 (AQNG…GRAF) and 240-325 (PGAL…EASR). The segment covering 54–69 (PAATTTRPSPTTPAMP) has biased composition (low complexity). Composition is skewed to polar residues over residues 89–99 (EQSNPSPSQDT) and 112–129 (RNLQ…SSGS). The residue at position 94 (serine 94) is a Phosphoserine. Residues 131-140 (AFHRLSRRRS) show a composition bias toward basic residues. Residue serine 140 is modified to Phosphoserine. Polar residues predominate over residues 257-268 (GQPTKDSLQSLQ). Serine 394 is modified (phosphoserine). The interval 438–461 (SRASVGSPGGSSEAHMAEPTLSTH) is disordered. Residues 605–822 (LLKLDEQGLC…RTRQEYLKDL (218 aa)) enclose the Rap-GAP domain. Residues 960-1024 (DMTLRRNGLG…DQMIDLLRTS (65 aa)) enclose the PDZ domain. Disordered stretches follow at residues 1040-1104 (PRRG…AQSL), 1117-1164 (RESQ…ATYA), and 1184-1632 (DPHF…LDPG). Composition is skewed to polar residues over residues 1074–1104 (APWQ…AQSL) and 1151–1160 (PSGSFSTPGS). The span at 1190–1201 (DGMSSGDSSSGG) shows a compositional bias: low complexity. Residues 1239 to 1255 (SRQDAAGKDSPNRHSKG) are compositionally biased toward basic and acidic residues. Residues 1260 to 1275 (SSHSSSNTLSSNASSS) show a composition bias toward low complexity. A compositionally biased stretch (polar residues) spans 1298-1316 (GGSSDSGIDTTLYTSSPSC). Residues 1344 to 1357 (SAGRPHPVDRRREV) are compositionally biased toward basic and acidic residues. Serine 1358 bears the Phosphoserine mark. Residue threonine 1381 is modified to Phosphothreonine. The span at 1409 to 1436 (VYKTASAETPRPSQLSQCSPFQLSTSVP) shows a compositional bias: polar residues. Lysine 1442 is subject to N6-acetyllysine. Basic and acidic residues predominate over residues 1503 to 1512 (TIEDDLKKLI). 2 stretches are compositionally biased toward polar residues: residues 1526 to 1541 (GQSP…SDES) and 1566 to 1578 (LFTS…SSTL). Phosphoserine is present on residues serine 1538 and serine 1541. Positions 1589–1601 (PPSGAPSTTPATG) are enriched in low complexity. Phosphoserine occurs at positions 1614 and 1617. Over residues 1620–1630 (DGRDRPLRRLD) the composition is skewed to basic and acidic residues. Position 1672 is a phosphoserine (serine 1672). Residues 1678–1705 (AHSPVHSHLSLERGPQTPRATPTMSEES) form a disordered region. Phosphothreonine occurs at positions 1694 and 1698. Residues 1715–1769 (QLEVMLKQLHTDLQKEKQDKVVLQSEVASLRQNNQRLQEESQAASEQLRKFAELF) are a coiled coil.

The protein localises to the apical cell membrane. Its function is as follows. Plays a critical role in epithelial cell morphogenesis, polarity, adhesion and cytoskeletal organization in the lens. The chain is Signal-induced proliferation-associated 1-like protein 3 (Sipa1l3) from Mus musculus (Mouse).